Consider the following 936-residue polypeptide: Protein translocase subunit SecA (936 aa).

ATP is bound by residues glutamine 90, 108-112, and aspartate 499; that span reads GEGKT.

This sequence belongs to the SecA family. As to quaternary structure, monomer and homodimer. Part of the essential Sec protein translocation apparatus which comprises SecA, SecYEG and auxiliary proteins SecDF. Other proteins may also be involved.

It is found in the cell inner membrane. The protein localises to the cellular thylakoid membrane. It localises to the cytoplasm. It carries out the reaction ATP + H2O + cellular proteinSide 1 = ADP + phosphate + cellular proteinSide 2.. Its function is as follows. Part of the Sec protein translocase complex. Interacts with the SecYEG preprotein conducting channel. Has a central role in coupling the hydrolysis of ATP to the transfer of proteins into and across the cell membrane, serving as an ATP-driven molecular motor driving the stepwise translocation of polypeptide chains across the membrane. Functionally, probably participates in protein translocation into and across both the cytoplasmic and thylakoid membranes in cyanobacterial cells. The sequence is that of Protein translocase subunit SecA from Trichodesmium erythraeum (strain IMS101).